Consider the following 673-residue polypeptide: Ribonucleoprotein PTB-binding 2 (673 aa).

Residues 1 to 17 are compositionally biased toward gly residues; sequence MAARGGGAGGAGSGSGP. The tract at residues 1-34 is disordered; the sequence is MAARGGGAGGAGSGSGPSAGTAGEAAEPALRPGE. Residues 18 to 29 are compositionally biased toward low complexity; it reads SAGTAGEAAEPA. RRM domains lie at 58 to 129, 131 to 209, and 220 to 298; these read RKIL…LQPT, ALLC…WMDV, and KCLC…FCAP. Residues 481–549 are disordered; it reads QLPAGQAGPG…KGTEVASKNQ (69 aa). Residues 499 to 512 show a composition bias toward low complexity; that stretch reads SASVSISEASFSGS. The span at 529–549 shows a compositional bias: polar residues; that stretch reads TGNQKTPQSQPKGTEVASKNQ.

Interacts with PTBP1 and RAVER1. As to expression, expressed throughout embryogenesis. Detected at low levels in adult lung, brain and kidney, but not in the other tissues tested.

The protein localises to the nucleus. The protein resides in the cytoplasm. Its function is as follows. May bind single-stranded nucleic acids. This Mus musculus (Mouse) protein is Ribonucleoprotein PTB-binding 2 (Raver2).